An 880-amino-acid polypeptide reads, in one-letter code: MRKLTPMMQQYMEIKNQYKDALMFFRLGDFYELFFDDAETASRELEITLTARDCGLESKAPMCGVPYHAANGYIDKLVSKGYKVAICEQVEDPSVAKGIVKRDVVRVITPGTLIDTNLLEDKKNNYLVSLYMSSLGCGFSYVDISTGELLSTEIVGTSIEQNLIDEISKIEPNELIYFVEEEDKIGTNFIEGIRKKLNIHISKYDPWTFEESYAMNQIKNQFNILTVESLGFSLNHLGINATGALIHYLKSTQKRTLSHINKINIYTFTEKMVLDISTRRNLELTETIRGKNKKGSLLWILDKTQTAMGGRMIRKWIEEPLLNIQNINRRLEAVATLKNDILLRCELKESLKQIYDLERLSGKIAFGSATPRDLVALKKSVAFLPDIKKLFENENSGLLKELLNNIDTLEDIQALIESSILDEPSISLKDGGIIKEGYNDELDELYVAAREGKHWIAKLEQAEKDRTGIKSLKVGYNKIFGYYIEITKSNLHLAPENYIRKQTLANCERYITPELKELEDKILGAEEKSIAIEYEQFIEIRNMLLHEIERIQRTARAVAELDVLYSFAEAASENNYVKPTVNSSETIDIKEGRHPVVEKVLENNMFISNDTYINTEDEQLLMITGPNMAGKSTYMRQVALIILMAQIGSFVPATSATIGITDRIFTRVGANDDLSQGQSTFMVEMSEMATIVNLATKKSLLIVDEIGRGTSTFDGLSIAWSTAEYICQSLGSRTLFSTHYHELTKLSETYRGIKNYKVLVKEDKEDVIFLHKVVKGNADRSYGIQVAKLAGLPAAIITRASHILSDLERESIQKEQYIIESTAENTLTASTDVANEKQLKLDDFIESEIVKDLKKINLLETTPMDALNILYQLQKKVAEI.

An ATP-binding site is contributed by G625–S632.

This sequence belongs to the DNA mismatch repair MutS family.

Functionally, this protein is involved in the repair of mismatches in DNA. It is possible that it carries out the mismatch recognition step. This protein has a weak ATPase activity. The protein is DNA mismatch repair protein MutS of Alkaliphilus oremlandii (strain OhILAs) (Clostridium oremlandii (strain OhILAs)).